The chain runs to 739 residues: Catalase-peroxidase (739 aa).

Positions 99–227 (WHSAGTYRMG…LAAVQMGLIY (129 aa)) form a cross-link, tryptophyl-tyrosyl-methioninium (Trp-Tyr) (with M-253). The active-site Proton acceptor is the histidine 100. A cross-link (tryptophyl-tyrosyl-methioninium (Tyr-Met) (with W-99)) is located at residues 227–253 (YVNPEGPDGNPDPVASGRDVRETFARM). Histidine 268 provides a ligand contact to heme b.

It belongs to the peroxidase family. Peroxidase/catalase subfamily. As to quaternary structure, homodimer or homotetramer. Requires heme b as cofactor. Formation of the three residue Trp-Tyr-Met cross-link is important for the catalase, but not the peroxidase activity of the enzyme.

It carries out the reaction H2O2 + AH2 = A + 2 H2O. It catalyses the reaction 2 H2O2 = O2 + 2 H2O. Bifunctional enzyme with both catalase and broad-spectrum peroxidase activity. The sequence is that of Catalase-peroxidase from Syntrophotalea carbinolica (strain DSM 2380 / NBRC 103641 / GraBd1) (Pelobacter carbinolicus).